A 184-amino-acid polypeptide reads, in one-letter code: ATP synthase subunit b, chloroplastic (184 aa).

A helical transmembrane segment spans residues 27–49; the sequence is LATNPINLSVVLGVLIFFGKGVL.

It belongs to the ATPase B chain family. F-type ATPases have 2 components, F(1) - the catalytic core - and F(0) - the membrane proton channel. F(1) has five subunits: alpha(3), beta(3), gamma(1), delta(1), epsilon(1). F(0) has four main subunits: a(1), b(1), b'(1) and c(10-14). The alpha and beta chains form an alternating ring which encloses part of the gamma chain. F(1) is attached to F(0) by a central stalk formed by the gamma and epsilon chains, while a peripheral stalk is formed by the delta, b and b' chains.

It localises to the plastid. Its subcellular location is the chloroplast thylakoid membrane. Its function is as follows. F(1)F(0) ATP synthase produces ATP from ADP in the presence of a proton or sodium gradient. F-type ATPases consist of two structural domains, F(1) containing the extramembraneous catalytic core and F(0) containing the membrane proton channel, linked together by a central stalk and a peripheral stalk. During catalysis, ATP synthesis in the catalytic domain of F(1) is coupled via a rotary mechanism of the central stalk subunits to proton translocation. Functionally, component of the F(0) channel, it forms part of the peripheral stalk, linking F(1) to F(0). In Nicotiana sylvestris (Wood tobacco), this protein is ATP synthase subunit b, chloroplastic.